The chain runs to 385 residues: 3-hydroxyisobutyryl-CoA hydrolase, mitochondrial (385 aa).

Glutamate 120, glycine 145, glutamate 168, and aspartate 176 together coordinate substrate.

The protein belongs to the enoyl-CoA hydratase/isomerase family.

It is found in the mitochondrion. The catalysed reaction is 3-hydroxy-2-methylpropanoyl-CoA + H2O = 3-hydroxy-2-methylpropanoate + CoA + H(+). It participates in amino-acid degradation; L-valine degradation. Its function is as follows. Hydrolyzes 3-hydroxyisobutyryl-CoA (HIBYL-CoA), a saline catabolite. Has high activity toward isobutyryl-CoA. Could be an isobutyryl-CoA dehydrogenase that functions in valine catabolism. Also hydrolyzes 3-hydroxypropanoyl-CoA. The protein is 3-hydroxyisobutyryl-CoA hydrolase, mitochondrial (hibch) of Xenopus tropicalis (Western clawed frog).